The following is a 341-amino-acid chain: Trimethylamine N-oxide transport system ATP-binding protein TmoW (341 aa).

The ABC transporter domain occupies 6–265 (IKCESVYKIF…PATEYVRKFT (260 aa)). Residue 61 to 68 (GLSGSGKS) participates in ATP binding.

Belongs to the ABC transporter superfamily. The complex is probably composed of two ATP-binding proteins (TmoW), two transmembrane proteins (TmoV) and a solute-binding protein (TmoX).

It localises to the cell inner membrane. It catalyses the reaction a quaternary ammonium(out) + ATP + H2O = a quaternary ammonium(in) + ADP + phosphate + H(+). In terms of biological role, part of the ABC transporter complex TmoXWV involved in trimethylamine N-oxide (TMAO) import. Responsible for energy coupling to the transport system. This chain is Trimethylamine N-oxide transport system ATP-binding protein TmoW, found in Pelagibacter ubique (strain HTCC1062).